A 619-amino-acid chain; its full sequence is DNA mismatch repair protein MutL (619 aa).

Low complexity predominate over residues 364–375 (EPASAREPAAPR). The tract at residues 364–399 (EPASAREPAAPRYSTSSGATGGRQPAASWPHAQPGY) is disordered.

This sequence belongs to the DNA mismatch repair MutL/HexB family.

Its function is as follows. This protein is involved in the repair of mismatches in DNA. It is required for dam-dependent methyl-directed DNA mismatch repair. May act as a 'molecular matchmaker', a protein that promotes the formation of a stable complex between two or more DNA-binding proteins in an ATP-dependent manner without itself being part of a final effector complex. This is DNA mismatch repair protein MutL from Citrobacter koseri (strain ATCC BAA-895 / CDC 4225-83 / SGSC4696).